A 588-amino-acid polypeptide reads, in one-letter code: Vicilin C72 (588 aa).

Positions 1–25 are cleaved as a signal peptide; sequence MVRNKSACVVLLFSLFLSFGLLCSA. Disordered regions lie at residues 159–183 and 460–487; these read RERE…NPFH and PRQS…GQYR. A compositionally biased stretch (acidic residues) spans 163 to 175; sequence EEAEEEETEEGEQ. Cupin type-1 domains follow at residues 182-340 and 386-566; these read FHFH…EQLD and FNLL…RLVD. Acidic residues predominate over residues 465 to 478; sequence FEEEEEQQQEQEQE.

The protein belongs to the 7S seed storage protein family.

Its subcellular location is the vacuole. The protein resides in the aleurone grain. Functionally, seed storage protein. The chain is Vicilin C72 from Gossypium hirsutum (Upland cotton).